Here is a 411-residue protein sequence, read N- to C-terminus: Tyrosine--tRNA ligase (411 aa).

Tyr34 provides a ligand contact to L-tyrosine. A 'HIGH' region motif is present at residues Cys39–Ser48. The L-tyrosine site is built by Tyr171 and Gln175. Positions Lys231–Thr235 match the 'KMSKS' region motif. ATP is bound at residue Lys234. Positions Ile345–Val411 constitute an S4 RNA-binding domain.

The protein belongs to the class-I aminoacyl-tRNA synthetase family. TyrS type 1 subfamily. As to quaternary structure, homodimer.

Its subcellular location is the cytoplasm. It carries out the reaction tRNA(Tyr) + L-tyrosine + ATP = L-tyrosyl-tRNA(Tyr) + AMP + diphosphate + H(+). In terms of biological role, catalyzes the attachment of tyrosine to tRNA(Tyr) in a two-step reaction: tyrosine is first activated by ATP to form Tyr-AMP and then transferred to the acceptor end of tRNA(Tyr). In Rickettsia typhi (strain ATCC VR-144 / Wilmington), this protein is Tyrosine--tRNA ligase.